The following is a 376-amino-acid chain: 26S proteasome non-ATPase regulatory subunit 13 (376 aa).

One can recognise a PCI domain in the interval serine 171–proline 338.

It belongs to the proteasome subunit S11 family. Component of the 19S proteasome regulatory particle complex. The 26S proteasome consists of a 20S core particle (CP) and two 19S regulatory subunits (RP). The regulatory particle is made of a lid composed of 9 subunits including PSMD13, a base containing 6 ATPases and few additional components.

In terms of biological role, component of the 26S proteasome, a multiprotein complex involved in the ATP-dependent degradation of ubiquitinated proteins. This complex plays a key role in the maintenance of protein homeostasis by removing misfolded or damaged proteins, which could impair cellular functions, and by removing proteins whose functions are no longer required. Therefore, the proteasome participates in numerous cellular processes, including cell cycle progression, apoptosis, or DNA damage repair. This Bos taurus (Bovine) protein is 26S proteasome non-ATPase regulatory subunit 13 (PSMD13).